A 380-amino-acid chain; its full sequence is MAPNLRKSHPLLKMINNSLIDLPTPPNISAWWNFGSLLGICLMTQILTGLLLAMHYTADTTLAFSSVAHTCRNVQYGWLIRNLHANGASFFFICIYLHIGRGFYYGSYLYKETWNTGVILLLTLMATAFVGYVLPWGQMSFWGATVITNLFSAIPYIGQTLVEWAWGGFSVDNPTLTRFFALHFLLPFMIAGLTLVHLTFLHESGSNNPLGIVSNCDKIPFHPYFTLKDILGFTLMLLPLTTLALFSPNLLGDPENFTPANPLVTPPHIKPEWYFLFAYAILRSIPNKLGGVLALAASVLILFLAPFLHKAKQRTMTFRPLSQLLFWILVANLFILTWVGSQPVEHPFIIIGQLASFTYFTILLILFPIIGALENKMLNY.

The next 4 membrane-spanning stretches (helical) occupy residues 34–54 (FGSL…LLAM), 78–99 (WLIR…YLHI), 114–134 (WNTG…GYVL), and 179–199 (FFAL…VHLT). The heme b site is built by histidine 84 and histidine 98. Heme b is bound by residues histidine 183 and histidine 197. Histidine 202 is a binding site for a ubiquinone. 4 helical membrane passes run 227–247 (LKDI…ALFS), 289–309 (LGGV…PFLH), 321–341 (LSQL…WVGS), and 348–368 (FIII…ILFP).

It belongs to the cytochrome b family. In terms of assembly, the cytochrome bc1 complex contains 11 subunits: 3 respiratory subunits (MT-CYB, CYC1 and UQCRFS1), 2 core proteins (UQCRC1 and UQCRC2) and 6 low-molecular weight proteins (UQCRH/QCR6, UQCRB/QCR7, UQCRQ/QCR8, UQCR10/QCR9, UQCR11/QCR10 and a cleavage product of UQCRFS1). This cytochrome bc1 complex then forms a dimer. It depends on heme b as a cofactor.

It localises to the mitochondrion inner membrane. Its function is as follows. Component of the ubiquinol-cytochrome c reductase complex (complex III or cytochrome b-c1 complex) that is part of the mitochondrial respiratory chain. The b-c1 complex mediates electron transfer from ubiquinol to cytochrome c. Contributes to the generation of a proton gradient across the mitochondrial membrane that is then used for ATP synthesis. This chain is Cytochrome b (MT-CYB), found in Procellaria parkinsoni (Black petrel).